The following is a 127-amino-acid chain: Multifunctional methyltransferase subunit trm112 (127 aa).

One can recognise a TRM112 domain in the interval 2–123 (KVMTLNFLTC…KNGVANFLLP (122 aa)).

It belongs to the TRM112 family. As to quaternary structure, heterodimer of mtq2-rmt-1/trm112, forming the eRF1 methyltransferase. Rmt-1/trm112 is necessary for the solubility and activity of the catalytic subunit mtq2. Interacts with trm11; required for full tRNA methyltransferase activity. Interacts with bud23; required for full rRNA methyltransferase activity.

It is found in the cytoplasm. Its subcellular location is the nucleus. Its function is as follows. Acts as an activator of both rRNA/tRNA and protein methyltransferases. Together with methyltransferase mtq2, required for the methylation of eRF1 on 'Gln-182'. Together with methyltransferase trm11, required for the formation of 2-methylguanosine at position 10 (m2G10) in tRNA. Together with methyltransferase bud23, required for the formation of a 7-methylguanine in 18S rRNA. Involved in biogenesis of both 40S and 60S ribosomal subunits. This is Multifunctional methyltransferase subunit trm112 (rmt-1) from Neurospora crassa (strain ATCC 24698 / 74-OR23-1A / CBS 708.71 / DSM 1257 / FGSC 987).